The chain runs to 381 residues: Putative F-box protein At3g17500 (381 aa).

An F-box domain is found at methionine 1 to histidine 45.

The sequence is that of Putative F-box protein At3g17500 from Arabidopsis thaliana (Mouse-ear cress).